The chain runs to 459 residues: Type IV methyl-directed restriction enzyme EcoKMcrB subunit (459 aa).

Residues 201–208 (GPPGVGKT), 300–303 (DKRG), and 333–336 (NTAD) contribute to the GTP site.

Functionally, recognizes N4- and C5-methylcytosine (and 5-hydroxy-methylcytosines) produced by a broad range of DNA methylases and appears to act against 5-methylcytosine preceded by a purine residue. Binds to DNA containing methylated cytosines; also binds to GTP. Isoform 33 kDa is less active than isoform 51 kDa and may play a role in regulating the activity of isoform 51 kDa by competing with it in DNA and protein binding abilities. The chain is Type IV methyl-directed restriction enzyme EcoKMcrB subunit (mcrB) from Escherichia coli (strain K12).